We begin with the raw amino-acid sequence, 110 residues long: Large ribosomal subunit protein uL22 (110 aa).

This sequence belongs to the universal ribosomal protein uL22 family. In terms of assembly, part of the 50S ribosomal subunit.

Functionally, this protein binds specifically to 23S rRNA; its binding is stimulated by other ribosomal proteins, e.g. L4, L17, and L20. It is important during the early stages of 50S assembly. It makes multiple contacts with different domains of the 23S rRNA in the assembled 50S subunit and ribosome. In terms of biological role, the globular domain of the protein is located near the polypeptide exit tunnel on the outside of the subunit, while an extended beta-hairpin is found that lines the wall of the exit tunnel in the center of the 70S ribosome. This chain is Large ribosomal subunit protein uL22, found in Acinetobacter baylyi (strain ATCC 33305 / BD413 / ADP1).